Reading from the N-terminus, the 101-residue chain is Iron-sulfur cluster assembly protein CyaY (101 aa).

This sequence belongs to the frataxin family.

In terms of biological role, involved in iron-sulfur (Fe-S) cluster assembly. May act as a regulator of Fe-S biogenesis. In Haemophilus influenzae (strain 86-028NP), this protein is Iron-sulfur cluster assembly protein CyaY.